A 609-amino-acid polypeptide reads, in one-letter code: MAAMDPRNNGNVAPLNERERAENLEVREVVEVQDDQSVVSLMSNDSDLQKKMMKKEEKKNGGWTNAIILLVNQGLATLAFFGVGVNLVLFLTRVMGQGNAEAANNVSKWTGTVYMFSLVGAFLSDSYWGRYLTCTIFQVIFVIGVGLLSFVSWFFLIKPRGCGDGDLECNPPSSLGVAIFYLSVYLVAFGYGGHQPTLATFGADQLDDDKNSKAAFFSYFYFALNVGALFSNTILVYFEDKGLWTEGFLVSLGSAIVALVAFLAPTRQYRYVKPCGNPLPRVAQVFVATARKWSVVRPGDPHELYELEGPESAIKGSRKIFHSTKFLFLDRAAVITENDRNGTRSNAWRLCSVTQVEEAKCVMKLLPIWLCTIIYSVIFTQMASLFVEQGDVMNAYVGKFHIPAASMSVFDIFSVFVSTGIYRHIIFPYVRPTELMRMGIGLIIGIMAMVAAGLTEIQRLKRVVPGQKESELTILWQIPQYVLVGASEVFMYVGQLEFFNGQAPDGLKNLGSSLCMASMALGNYVSSLMVNIVMAITKRGENSPGWIPENLNEGHMDRFYFLIAALAAIDFVVYLIFAKWYQPISHDEDSIKGGSGGSLKKTVSELEQV.

Transmembrane regions (helical) follow at residues 67–87 and 109–129; these read IILLVNQGLATLAFFGVGVNL and WTGTVYMFSLVGAFLSDSYWG. T133 carries the post-translational modification Phosphothreonine. 10 helical membrane passes run 136 to 156, 173 to 193, 216 to 236, 243 to 263, 367 to 387, 402 to 422, 438 to 458, 474 to 494, 516 to 536, and 559 to 579; these read IFQVIFVIGVGLLSFVSWFFL, SSLGVAIFYLSVYLVAFGYGG, FFSYFYFALNVGALFSNTILV, LWTEGFLVSLGSAIVALVAFL, PIWLCTIIYSVIFTQMASLFV, IPAASMSVFDIFSVFVSTGIY, MGIGLIIGIMAMVAAGLTEIQ, ILWQIPQYVLVGASEVFMYVG, MASMALGNYVSSLMVNIVMAI, and FYFLIAALAAIDFVVYLIFAK.

The protein belongs to the major facilitator superfamily. Proton-dependent oligopeptide transporter (POT/PTR) (TC 2.A.17) family. As to expression, expressed in flowers.

The protein localises to the membrane. This Arabidopsis thaliana (Mouse-ear cress) protein is Protein NRT1/ PTR FAMILY 7.1 (NPF7.1).